The chain runs to 708 residues: Polyribonucleotide nucleotidyltransferase (708 aa).

Residues Asp-487 and Asp-493 each contribute to the Mg(2+) site. The 60-residue stretch at 554 to 613 (PRIHTMKISADKIKDVIGKGGAVIRALTEETGTTIEIEDDGTIKIAATEGAAAKEAIRRI) folds into the KH domain. The S1 motif domain occupies 623 to 691 (GVIYTGKVAR…RQGRVRLSMK (69 aa)).

Belongs to the polyribonucleotide nucleotidyltransferase family. Component of the RNA degradosome, which is a multiprotein complex involved in RNA processing and mRNA degradation. Mg(2+) is required as a cofactor.

It localises to the cytoplasm. It carries out the reaction RNA(n+1) + phosphate = RNA(n) + a ribonucleoside 5'-diphosphate. Functionally, involved in mRNA degradation. Catalyzes the phosphorolysis of single-stranded polyribonucleotides processively in the 3'- to 5'-direction. This Vibrio vulnificus (strain CMCP6) protein is Polyribonucleotide nucleotidyltransferase.